The sequence spans 299 residues: Ophiobolin family sesterterpenoid biosynthesis cluster acetyltransferase (299 aa).

An N-terminal signal peptide occupies residues 1-20 (MYFFRALLSPVVLWPALVSG). N-linked (GlcNAc...) asparagine glycosylation is found at Asn28, Asn58, Asn77, Asn126, Asn177, Asn212, and Asn282.

Belongs to the bfoA family.

The protein operates within secondary metabolite biosynthesis; terpenoid biosynthesis. Acetyltransferase; part of the gene cluster that mediates the biosynthesis of an ophiobolin family sesterterpenoid. In terms of biological role, sesterterpenoid synthase; part of the gene cluster that mediates the biosynthesis of an ophiobolin family sesterterpenoid. This Aspergillus terreus protein is Ophiobolin family sesterterpenoid biosynthesis cluster acetyltransferase.